The chain runs to 426 residues: 3-phosphoshikimate 1-carboxyvinyltransferase (426 aa).

3 residues coordinate 3-phosphoshikimate: K22, S23, and R27. K22 serves as a coordination point for phosphoenolpyruvate. Residues G96 and R124 each coordinate phosphoenolpyruvate. 3-phosphoshikimate is bound by residues S170, S171, Q172, S198, D314, N337, and K341. Q172 lines the phosphoenolpyruvate pocket. D314 (proton acceptor) is an active-site residue. The phosphoenolpyruvate site is built by R345, R387, and K412.

It belongs to the EPSP synthase family. Monomer.

It localises to the cytoplasm. It catalyses the reaction 3-phosphoshikimate + phosphoenolpyruvate = 5-O-(1-carboxyvinyl)-3-phosphoshikimate + phosphate. It participates in metabolic intermediate biosynthesis; chorismate biosynthesis; chorismate from D-erythrose 4-phosphate and phosphoenolpyruvate: step 6/7. Its function is as follows. Catalyzes the transfer of the enolpyruvyl moiety of phosphoenolpyruvate (PEP) to the 5-hydroxyl of shikimate-3-phosphate (S3P) to produce enolpyruvyl shikimate-3-phosphate and inorganic phosphate. The sequence is that of 3-phosphoshikimate 1-carboxyvinyltransferase from Vibrio campbellii (strain ATCC BAA-1116).